Reading from the N-terminus, the 145-residue chain is Large ribosomal subunit protein uL13 (145 aa).

This sequence belongs to the universal ribosomal protein uL13 family. In terms of assembly, part of the 50S ribosomal subunit.

Its function is as follows. This protein is one of the early assembly proteins of the 50S ribosomal subunit, although it is not seen to bind rRNA by itself. It is important during the early stages of 50S assembly. This is Large ribosomal subunit protein uL13 from Listeria innocua serovar 6a (strain ATCC BAA-680 / CLIP 11262).